The sequence spans 1233 residues: MSKERPKRNIIQKEYDDSDGIPWSEERVVRKVLYLSLKEFKNAQKRQHGDGISGSLKAVNGLLTNGQSKGLESEQLENEKDDASQVSSTSNDISSSDFEEGPSRKRPRLQAQRKFAQSQPNSPSTTPIKIVEPLLPPPATQISDLSKRKPKTEDFLTFLCLRGSPALPSNMVYFGSSQDDEDEEEEEEETEDTKTATNNASSSCQSTPRKGKTHKQVPNGQVFNGSSKSLKEKEPAQKHKSKEATPGKEKNSEHKAESRKDQAAANHHPTTNTGSSTKGLTANNHHTLHRSAQDLRKQVSKVNGITRMSSPSANAASAKKMRDVRPSPSKTVKYTATVTKGTVTYTKAKKELVKETKLNHHKPSSPVNHTISGKLESSNAKTRKQVLSLGASKSNNTAVNGVKVNGKLNQKTCTKEVGRQLREGLRNSKRRLEETNHIDKIQSPTKRMKGAVNLAEAASKKAVVEKPLLNGHLKKEVPEKNLERNRPKRATAGKSTPGKQAHGKTENASCENRSTSQAESLHKPQDSMGKHEKGSSKSGWGMLGEIPILRPSTKEFHDPLIYIESVRAQVEKYGMCRVIPPPDWRPECKLNDEMRFVTQIQHIHKLGRRWGPNVQRLACIKKHLKSQGITMDELPLIGGCELDLACFVQLINEMGGMQQVTDLKKWNKLADMLRIPKTAQDRLAKLQEAYCQYLLSYDSLSPEEHKKLEKEVLLEKEILEKRKGPLEGHSENAYKFHSLPRFEPKNGLINGVVHKNGFRNKLKEVDVPLKTGRRRLFAQEKETTKDDEEEEEEGVLSDLHKCIYKGRSVSLTTFYRTARNIMNMCFTKEPTVAEVEQEYWRLVEQKDSHVAVHCGKVDTNTHGSGFPVGKSEPFSRHGWNLTVLPNNTGSILRHLGAVPGVTIPWLNIGMVFSTSCWSRDQNHLPYIDYLHTGADCIWYCIPAAEENKLDDVVHTLLQANGTPGLEMLESNVMISPEILCKEGIRVHRTVQQSGQFVVCFPGSFVSKVCCGYSVSETVHFATTQWTSMGFKTAKEMKRRRIAKPFSMEKLLYQIATAEAKKENGPTLSTISSLLGELRDTELRQRRQLYEAGLHSSARYGSHDSSSTAMDGKKKPRKWLQLETSERRCQICQHLCYLSMVVQENENVVFCLECALRHVEKQKSCRGLKMMYRYDEEQIISLVNQICGKVSGKNGSIENCISKPTPKRGPRKRATVDVPSSRLSSSSSSKSASS.

Positions 1–10 (MSKERPKRNI) are enriched in basic residues. Disordered stretches follow at residues 1–22 (MSKERPKRNIIQKEYDDSDGIP), 65–148 (NGQS…LSKR), 165–335 (PALP…VKYT), 355–379 (ETKLNHHKPSSPVNHTISGKLESSN), 423–451 (EGLRNSKRRLEETNHIDKIQSPTKRMKGA), and 466–542 (KPLL…GWGM). The segment covering 84–96 (SQVSSTSNDISSS) has biased composition (low complexity). The short motif at 102-108 (PSRKRPR) is the Nuclear localization signal element. Polar residues predominate over residues 115–127 (FAQSQPNSPSTTP). The sufficient for interaction with the PRC2 complex stretch occupies residues 139–168 (ATQISDLSKRKPKTEDFLTFLCLRGSPALP). The span at 178 to 191 (QDDEDEEEEEEETE) shows a compositional bias: acidic residues. Polar residues-rich tracts occupy residues 195 to 208 (TATNNASSSCQSTP) and 216 to 228 (QVPNGQVFNGSSK). Over residues 229–262 (SLKEKEPAQKHKSKEATPGKEKNSEHKAESRKDQ) the composition is skewed to basic and acidic residues. Residues 268–285 (HPTTNTGSSTKGLTANNH) are compositionally biased toward polar residues. Residues 309-318 (SSPSANAASA) show a composition bias toward low complexity. The span at 365–379 (SPVNHTISGKLESSN) shows a compositional bias: polar residues. Basic and acidic residues-rich tracts occupy residues 423–440 (EGLRNSKRRLEETNHIDK) and 473–485 (LKKEVPEKNLERN). Over residues 506 to 519 (ENASCENRSTSQAE) the composition is skewed to polar residues. Residues 520–535 (SLHKPQDSMGKHEKGS) show a composition bias toward basic and acidic residues. The JmjN domain maps to 546 to 587 (IPILRPSTKEFHDPLIYIESVRAQVEKYGMCRVIPPPDWRPE). The region spanning 610–702 (WGPNVQRLAC…YLLSYDSLSP (93 aa)) is the ARID domain. Residues 863-867 (GSGFP) carry the GSGFP motif motif. Residues 873 to 1037 (PFSRHGWNLT…MGFKTAKEMK (165 aa)) form the JmjC domain. The segment at 1197–1233 (ENCISKPTPKRGPRKRATVDVPSSRLSSSSSSKSASS) is disordered. The span at 1219–1233 (SSRLSSSSSSKSASS) shows a compositional bias: low complexity.

It belongs to the JARID2 family. In terms of assembly, associates with the PRC2 complex.

The protein resides in the nucleus. In terms of biological role, regulator of histone methyltransferase complexes that plays an essential role in embryonic development, including heart and liver development, neural tube fusion process and hematopoiesis. Acts as an accessory subunit for the core PRC2 (Polycomb repressive complex 2) complex, which mediates histone H3K27 (H3K27me3) trimethylation on chromatin. Binds DNA and mediates the recruitment of the PRC2 complex to target genes in embryonic stem cells, thereby playing a key role in stem cell differentiation and normal embryonic development. In cardiac cells, it is required to repress expression of cyclin-D1 (CCND1) by activating methylation of 'Lys-9' of histone H3 (H3K9me) by the GLP1/EHMT1 and G9a/EHMT2 histone methyltransferases. Also acts as a transcriptional repressor of ANF via its interaction with GATA4 and NKX2-5. Participates in the negative regulation of cell proliferation signaling. Does not have histone demethylase activity. This chain is Protein Jumonji (JARID2), found in Gallus gallus (Chicken).